The following is a 283-amino-acid chain: Putative F-box protein At1g60370 (283 aa).

Positions 4–53 constitute an F-box domain; sequence GEKLESIPIDLIIEIHSRLPAESVARFRCVSKLWGSMFRRPYFTELFLTR.

This is Putative F-box protein At1g60370 from Arabidopsis thaliana (Mouse-ear cress).